The sequence spans 396 residues: Probable sugar efflux transporter (396 aa).

Transmembrane regions (helical) follow at residues 15-35, 50-70, 81-101, 103-123, 136-156, 169-189, 209-229, 246-266, 275-295, 301-321, 333-353, and 364-384; these read VVTL…PVGL, VGIM…PFML, LICL…AWNF, VLVI…SITA, AQAL…GLPI, TFFA…KLLP, PALM…YTAY, FATV…LVFG, SLVS…LPAA, LAIL…GMQV, VAMA…ALVG, and AIGY…VLIF.

Belongs to the major facilitator superfamily. SotB (TC 2.A.1.2) family.

The protein resides in the cell inner membrane. Involved in the efflux of sugars. The physiological role may be the reduction of the intracellular concentration of toxic sugars or sugar metabolites. The sequence is that of Probable sugar efflux transporter from Salmonella schwarzengrund (strain CVM19633).